Reading from the N-terminus, the 196-residue chain is Elongation factor Ts (196 aa).

Positions 80–83 are involved in Mg(2+) ion dislocation from EF-Tu; that stretch reads TDFV.

The protein belongs to the EF-Ts family. As to quaternary structure, heterotetramer composed of two EF-Ts.EF-Tu dimer complexes.

Its subcellular location is the cytoplasm. Functionally, associates with the EF-Tu.GDP complex and induces the exchange of GDP to GTP. It remains bound to the aminoacyl-tRNA.EF-Tu.GTP complex up to the GTP hydrolysis stage on the ribosome. This is Elongation factor Ts (tsf) from Thermus thermophilus (strain ATCC 27634 / DSM 579 / HB8).